We begin with the raw amino-acid sequence, 292 residues long: NADH-ubiquinone oxidoreductase chain 1 (292 aa).

The next 8 helical transmembrane spans lie at isoleucine 2–leucine 22, phenylalanine 71–isoleucine 91, glycine 98–alanine 118, valine 132–phenylalanine 152, methionine 167–leucine 187, leucine 213–alanine 233, isoleucine 235–tryptophan 255, and glycine 272–isoleucine 292.

It belongs to the complex I subunit 1 family.

The protein localises to the mitochondrion inner membrane. It catalyses the reaction a ubiquinone + NADH + 5 H(+)(in) = a ubiquinol + NAD(+) + 4 H(+)(out). Functionally, core subunit of the mitochondrial membrane respiratory chain NADH dehydrogenase (Complex I) that is believed to belong to the minimal assembly required for catalysis. Complex I functions in the transfer of electrons from NADH to the respiratory chain. The immediate electron acceptor for the enzyme is believed to be ubiquinone. The chain is NADH-ubiquinone oxidoreductase chain 1 (ND1) from Chlamydomonas reinhardtii (Chlamydomonas smithii).